A 901-amino-acid chain; its full sequence is Protein translocase subunit SecA (901 aa).

ATP is bound by residues glutamine 87, 105 to 109, and aspartate 512; that span reads GEGKT. The disordered stretch occupies residues 859–901; sequence HQDDDSAAAAALAAQTGERKVGRNDPCPCGSGKKYKQCHGRLQ. Zn(2+) contacts are provided by cysteine 885, cysteine 887, cysteine 896, and histidine 897. Over residues 891–901 the composition is skewed to basic residues; sequence KKYKQCHGRLQ.

It belongs to the SecA family. In terms of assembly, monomer and homodimer. Part of the essential Sec protein translocation apparatus which comprises SecA, SecYEG and auxiliary proteins SecDF-YajC and YidC. Zn(2+) is required as a cofactor.

Its subcellular location is the cell inner membrane. The protein localises to the cytoplasm. The catalysed reaction is ATP + H2O + cellular proteinSide 1 = ADP + phosphate + cellular proteinSide 2.. Part of the Sec protein translocase complex. Interacts with the SecYEG preprotein conducting channel. Has a central role in coupling the hydrolysis of ATP to the transfer of proteins into and across the cell membrane, serving both as a receptor for the preprotein-SecB complex and as an ATP-driven molecular motor driving the stepwise translocation of polypeptide chains across the membrane. The sequence is that of Protein translocase subunit SecA from Escherichia coli (strain 55989 / EAEC).